The primary structure comprises 378 residues: tRNA (guanine(37)-N(1))-methyltransferase (378 aa).

Residues His196, 234–235 (DL), 262–263 (DA), and Asn282 each bind S-adenosyl-L-methionine.

The protein belongs to the class I-like SAM-binding methyltransferase superfamily. TRM5/TYW2 family. In terms of assembly, monomer.

It localises to the mitochondrion matrix. The protein localises to the nucleus. The protein resides in the cytoplasm. It catalyses the reaction guanosine(37) in tRNA + S-adenosyl-L-methionine = N(1)-methylguanosine(37) in tRNA + S-adenosyl-L-homocysteine + H(+). Its function is as follows. Specifically methylates the N1 position of guanosine-37 in various cytoplasmic and mitochondrial tRNAs. Methylation is not dependent on the nature of the nucleoside 5' of the target nucleoside. This is the first step in the biosynthesis of wybutosine (yW), a modified base adjacent to the anticodon of tRNAs and required for accurate decoding. The chain is tRNA (guanine(37)-N(1))-methyltransferase from Trichomonas vaginalis (strain ATCC PRA-98 / G3).